The primary structure comprises 335 residues: MNTEATHDQNEALTTGARLRNAREQLGLSQQAVAERLCLKVSTVRDIEEDKAPADLASTFLRGYIRSYARLVHIPEEELQPGLEKQAPLRAAKVAPMQSFSLGKRRKKRDGWLMTFTWLVLFVVIGLSGAWWWQDHKAQQEEITTMADQSSAELNNNQSQSVPLDTSTTTDQAMATTPTSPVDTTATNTQTPAVTAPAPAVDPQQNAVVPPSQANVDTAATPAPAATTTPDGAAPLPTDQAGVTTPAVDPNALVMNFTADCWLEVTDATGKKLFSGMQRKDGNLNLTGQAPYKLKIGAPAAVQIQYQGKPVDLSRFIRTNQVARLTLNAEQSPAQ.

The Cytoplasmic portion of the chain corresponds to 1–111; the sequence is MNTEATHDQN…LGKRRKKRDG (111 aa). The HTH cro/C1-type domain maps to 19 to 71; it reads LRNAREQLGLSQQAVAERLCLKVSTVRDIEEDKAPADLASTFLRGYIRSYARL. Residues 30-49 constitute a DNA-binding region (H-T-H motif); the sequence is QQAVAERLCLKVSTVRDIEE. Residues 112–132 form a helical; Signal-anchor for type II membrane protein membrane-spanning segment; it reads WLMTFTWLVLFVVIGLSGAWW. Topologically, residues 133–335 are periplasmic; sequence WQDHKAQQEE…TLNAEQSPAQ (203 aa). A compositionally biased stretch (polar residues) spans 148-164; the sequence is DQSSAELNNNQSQSVPL. The tract at residues 148–239 is disordered; sequence DQSSAELNNN…PDGAAPLPTD (92 aa). Low complexity-rich tracts occupy residues 165–205 and 217–239; these read DTST…DPQQ and DTAA…LPTD.

The protein belongs to the RodZ family.

The protein resides in the cell inner membrane. Its function is as follows. Cytoskeletal protein that is involved in cell-shape control through regulation of the length of the long axis. This Escherichia coli O6:K15:H31 (strain 536 / UPEC) protein is Cytoskeleton protein RodZ.